The primary structure comprises 588 residues: Sperm-associated microtubule inner protein 4 (588 aa).

At threonine 219 the chain carries Phosphothreonine. Serine 224, serine 406, serine 421, serine 427, and serine 437 each carry phosphoserine. Residue tyrosine 441 is modified to Phosphotyrosine. Residues serine 457 and serine 484 each carry the phosphoserine modification. Threonine 512 bears the Phosphothreonine mark. Serine 516 carries the phosphoserine modification. Residue lysine 543 forms a Glycyl lysine isopeptide (Lys-Gly) (interchain with G-Cter in SUMO2) linkage. Serine 545 is modified (phosphoserine).

It localises to the cytoplasm. Its subcellular location is the cytoskeleton. It is found in the microtubule organizing center. The protein localises to the centrosome. The protein resides in the flagellum axoneme. Its function is as follows. Microtubule inner protein (MIP) part of the dynein-decorated doublet microtubules (DMTs) in flagellum axoneme. May serve to reinforce and thus stabilize the microtubule structure in the sperm flagella. The sequence is that of Sperm-associated microtubule inner protein 4 (Spmip4) from Rattus norvegicus (Rat).